We begin with the raw amino-acid sequence, 534 residues long: Protein BFR2 (534 aa).

The interval 27 to 148 is disordered; that stretch reads ENASLFQHNE…ETEEAQQKRH (122 aa). Phosphoserine is present on residues Ser-41 and Ser-44. The segment covering 52 to 77 has biased composition (basic and acidic residues); it reads EETKKAHYLEVEKSKLRAEKGLELND. The stretch at 86 to 161 forms a coiled coil; sequence SRQALYEEVS…KLIQQETKQA (76 aa). 2 stretches are compositionally biased toward acidic residues: residues 93-114 and 121-142; these read EVSE…EEDA and SEDE…ETEE. 3 positions are modified to phosphoserine: Ser-366, Ser-372, and Ser-379.

The protein belongs to the AATF family.

The protein resides in the nucleus. The protein localises to the nucleolus. In terms of biological role, involved in endoplasmic reticulum to Golgi transport. Involved in a protein-transport step blocked by brefeldin A, which disrupts the Golgi apparatus and its incoming protein flux. May also be involved for mass growth or cell proliferation. This chain is Protein BFR2 (BFR2), found in Saccharomyces cerevisiae (strain ATCC 204508 / S288c) (Baker's yeast).